We begin with the raw amino-acid sequence, 119 residues long: Large ribosomal subunit protein uL18 (119 aa).

The interval 1–23 is disordered; it reads MISKPDKNKTRQRRHARVRGKIS. The span at 10-20 shows a compositional bias: basic residues; sequence TRQRRHARVRG.

The protein belongs to the universal ribosomal protein uL18 family. Part of the 50S ribosomal subunit; part of the 5S rRNA/L5/L18/L25 subcomplex. Contacts the 5S and 23S rRNAs.

Its function is as follows. This is one of the proteins that bind and probably mediate the attachment of the 5S RNA into the large ribosomal subunit, where it forms part of the central protuberance. The sequence is that of Large ribosomal subunit protein uL18 from Lacticaseibacillus casei (strain BL23) (Lactobacillus casei).